Consider the following 362-residue polypeptide: Serine/threonine-protein kinase SBK2 (362 aa).

Basic and acidic residues predominate over residues 1–11; the sequence is MPGKQSEDRPM. A disordered region spans residues 1-20; it reads MPGKQSEDRPMEVAAVEDGG. Residues 62-330 enclose the Protein kinase domain; sequence YEEVRPLGQG…IKSYLGQPWK (269 aa). ATP-binding positions include 68–76 and K91; that span reads LGQGRFGRV. D183 (proton acceptor) is an active-site residue. A disordered region spans residues 317–362; sequence PVSSIKSYLGQPWKQREEGAEELTKELREDGSRGGQEAAKGEQPAC. Residues 330 to 348 show a composition bias toward basic and acidic residues; it reads KQREEGAEELTKELREDGS.

The protein belongs to the protein kinase superfamily. Ser/Thr protein kinase family. STKL subfamily.

It catalyses the reaction L-seryl-[protein] + ATP = O-phospho-L-seryl-[protein] + ADP + H(+). The enzyme catalyses L-threonyl-[protein] + ATP = O-phospho-L-threonyl-[protein] + ADP + H(+). In Rattus norvegicus (Rat), this protein is Serine/threonine-protein kinase SBK2 (Sbk2).